We begin with the raw amino-acid sequence, 229 residues long: Cell division topological specificity factor homolog, chloroplastic (229 aa).

A chloroplast-targeting transit peptide spans 1–30 (MAMSSGTLRISATLVSPYHHHHRNRLSLPS). The tract at residues 35 to 141 (VDFTGFISNG…KMILFSDRCD (107 aa)) is interaction with MIND1. The tract at residues 142-169 (VSDEAKRKIVNNIIHALSDFVEIESEEK) is homodimerization.

Belongs to the MinE family. As to quaternary structure, homodimer. Interacts with MIND1. These interactions are required for proper intraplastidic localization. Binds to ARC3. In terms of tissue distribution, expressed in green tissues, especially at the shoot apex. Also present in leaves, stems, buds, and flowers, especially in sepals, siliques (tip and base), and anthers (mostly in pollen grains).

The protein resides in the plastid. The protein localises to the chloroplast. Acts as a topological specificity factor during plastid division and specify plastid constriction sites (such as the Z-ring) in a MCD1-dependent manner. Especially involved in epidermal plastids division in a FTSZ1-dependent manner. Required for the proper formation of FtsZ rings at the division site in nongreen plastids (e.g. etioplasts). May contribute to gravitropism in stems and hypocotyls. Stimulates MIND1 ATPase activity. In cooperation with MIND1, prevents FtsZ ring formation anywhere outside of the mid-plastids. In Arabidopsis thaliana (Mouse-ear cress), this protein is Cell division topological specificity factor homolog, chloroplastic.